The chain runs to 328 residues: Transcription initiation factor IIB 4 (328 aa).

Basic and acidic residues-rich tracts occupy residues 1–12 (MTNQRTTRDGSH) and 21–32 (RSRESTDEDHGC). Residues 1–47 (MTNQRTTRDGSHGTESVPTQRSRESTDEDHGCPECNGDLVTDEDRGE) are disordered. Residues 28-58 (EDHGCPECNGDLVTDEDRGETTCGECGLVVE) form a TFIIB-type zinc finger. Residues Cys-32, Cys-35, Cys-50, and Cys-53 each coordinate Zn(2+). 2 repeat units span residues 144 to 227 (GEIE…AREL) and 238 to 319 (SYVP…EILD).

This sequence belongs to the TFIIB family.

In terms of biological role, stabilizes TBP binding to an archaeal box-A promoter. Also responsible for recruiting RNA polymerase II to the pre-initiation complex (DNA-TBP-TFIIB). The sequence is that of Transcription initiation factor IIB 4 from Halobacterium salinarum (strain ATCC 700922 / JCM 11081 / NRC-1) (Halobacterium halobium).